The primary structure comprises 482 residues: Histone deacetylase 1 (482 aa).

Residues 9 to 321 (RKVCYYYDGD…WTYETAVALD (313 aa)) form a histone deacetylase region. 1D-myo-inositol 1,4,5,6-tetrakisphosphate contacts are provided by glycine 27 and lysine 31. Lysine 74 is modified (N6-acetyllysine; alternate). Lysine 74 is covalently cross-linked (Glycyl lysine isopeptide (Lys-Gly) (interchain with G-Cter in SUMO2); alternate). The active site involves histidine 141. Residues aspartate 176 and histidine 178 each contribute to the Zn(2+) site. An N6-acetyllysine modification is found at lysine 220. An S-nitrosocysteine modification is found at cysteine 261. Aspartate 264 is a Zn(2+) binding site. Arginine 270 serves as a coordination point for 1D-myo-inositol 1,4,5,6-tetrakisphosphate. Cysteine 273 carries the post-translational modification S-nitrosocysteine. Acidic residues predominate over residues 390–400 (PEESGDEDEED). The segment at 390-482 (PEESGDEDEE…KGVKEEVKLA (93 aa)) is disordered. A phosphoserine mark is found at serine 393, serine 406, serine 409, serine 421, and serine 423. Residues 401 to 416 (PDKRISICSSDKRIAC) are compositionally biased toward basic and acidic residues. Positions 417–427 (EEEFSDSDEEG) are enriched in acidic residues. Lysine 432 carries the post-translational modification N6-methylated lysine; by EHMT2. Lysine 438 participates in a covalent cross-link: Glycyl lysine isopeptide (Lys-Gly) (interchain with G-Cter in SUMO2). Positions 443 to 482 (VKTEDEKEKDPEEKKEVTEEEKTKEEKQEAKGVKEEVKLA) are enriched in basic and acidic residues. Lysine 444 participates in a covalent cross-link: Glycyl lysine isopeptide (Lys-Gly) (interchain with G-Cter in SUMO2); alternate. A Glycyl lysine isopeptide (Lys-Gly) (interchain with G-Cter in SUMO); alternate cross-link involves residue lysine 444. Glycyl lysine isopeptide (Lys-Gly) (interchain with G-Cter in SUMO2) cross-links involve residues lysine 456, lysine 457, and lysine 473. Residue lysine 476 forms a Glycyl lysine isopeptide (Lys-Gly) (interchain with G-Cter in SUMO2); alternate linkage. A Glycyl lysine isopeptide (Lys-Gly) (interchain with G-Cter in SUMO); alternate cross-link involves residue lysine 476. Lysine 480 participates in a covalent cross-link: Glycyl lysine isopeptide (Lys-Gly) (interchain with G-Cter in SUMO2).

This sequence belongs to the histone deacetylase family. HD type 1 subfamily. Part of the core histone deacetylase (HDAC) complex composed of HDAC1, HDAC2, RBBP4 and RBBP7, the core complex associates with SIN3, SAP18 and SAP30 to form the SIN3 HDAC complex. Component of the nucleosome remodeling and deacetylase (NuRD) repressor complex, composed of core proteins MTA1, MTA2, MTA3, RBBP4, RBBP7, HDAC1, HDAC2, MBD2, MBD3, and peripherally associated proteins CDK2AP1, CDK2AP2, GATAD2A, GATAD2B, CHD3, CHD4 and CHD5. The exact stoichiometry of the NuRD complex is unknown, and some subunits such as MBD2 and MBD3, GATAD2A and GATAD2B, and CHD3, CHD4 and CHD5 define mutually exclusive NuRD complexes. Component of a BHC histone deacetylase complex that contains HDAC1, HDAC2, HMG20B/BRAF35, KDM1A, RCOR1/CoREST and PHF21A/BHC80. The BHC complex may also contain ZMYM2, ZNF217, ZMYM3, GSE1 and GTF2I. Component of a mSin3A corepressor complex that contains SIN3A, SAP130, SUDS3/SAP45, ARID4B/SAP180, HDAC1 and HDAC2. Found in a trimeric complex with APBB1 and TSHZ3; the interaction between HDAC1 and APBB1 is mediated by TSHZ3. Forms a complex comprising APPL1, RUVBL2, APPL2, CTNNB1 and HDAC2. Component of a RCOR/GFI/KDM1A/HDAC complex. Part of a complex composed of TRIM28, HDAC1, HDAC2 and EHMT2. Part of a complex containing at least CDYL, MIER1, MIER2, HDAC1 and HDAC2. The large PER complex involved in the histone deacetylation is composed of at least HDAC1, PER2, SFPQ and SIN3A. Associates with the 9-1-1 complex; interacts with HUS1. Found in a complex with DNMT3A and HDAC7. Found in a complex with YY1, SIN3A and GON4L. Identified in a histone deacetylase complex that contains DNTTIP1, HDAC1 and MIDEAS; this complex assembles into a tetramer that contains four copies of each protein chain. Found in a complex composed of at least SINHCAF, SIN3A, HDAC1, SAP30, RBBP4, OGT and TET1. Component of the SIN3B complex, which includes SIN3B, HDAC1, PHF12 and MORF4L1. Interacts with GFI1; the interaction is direct. Interacts directly with GFI1B. Interacts with TSHZ3 (via N-terminus); the interaction is direct. Interacts with APEX1; the interaction is not dependent on the acetylated status of APEX1. Interacts with BANP. Interacts with BAZ2A/TIP5. Interacts with BCL6. Interacts with BCOR. Interacts with BHLHE40/DEC1. Interacts with BRCC3; this interaction is enhanced in the presence of PWWP2B. Interacts with BRMS1. Interacts with BRMS1L. Interacts with C10orf90/FATS (via its N-terminal); the interaction prevents binding of HDAC1 to CDKN1A/p21 and facilitates the acetylation and stabilization of CDKN1A/p21. Interacts with CBFA2T3. Interacts with CCAR2. Interacts with CDK2AP1. Interacts with CHD3. Interacts with CHD4. Interacts with CHFR. Interacts with CIART. Interacts with CDKN1A/p21. Interacts with CDK5 complexed to CDK5R1 (p25). Interacts with CRY1. Interacts with DAXX. Interacts with DDIT3/CHOP. Interacts with DDX5. Interacts with DHX36; this interaction occurs in a RNA-dependent manner. Interacts with DNMT1. Interacts with DNTTIP1. Interacts with E4F1. Interacts with EP300. Interacts with ERCC6. Interacts with GATAD2A. Interacts with HCFC1. Interacts with HDAC9. Interacts with HUS1. Interacts with INSM1. Interacts with KDM4A. Interacts with KDM5A; this interaction impairs histone deacetylation. Interacts with KDM5B. Interacts with KLF1. Interacts with MBD3L2. Interacts with MIER1. Interacts with NFE4. Interacts with NR4A2/NURR1. Interacts with NR1D2 (via C-terminus). Interacts with NRIP1. Interacts with NSD2. Interacts with PACS2. Interacts with PHB2. Interacts with PPHLN1. Interacts with PRDM6. Interacts with PRDM16. Interacts with PWWP2A in a MTA1-dependent manner. Interacts with PWWP2B. Interacts with RB1. Interacts with RERE. Interacts with SANBR (via the BTB domain). Interacts with SAMSN1. Interacts with SAP30L. Interacts with SETDB1. Interacts with SIN3A. Interacts with SMAD3. Interacts with SMAD4; positively regulated by ZBTB7A. Interacts with SMARCAD1. Interacts with SMARCA4/BRG1. Interacts with SMYD2. Interacts with SMYD4 (via MYND-type zinc finger). Interacts with SP1; the interaction deacetylates SP1 and regulates its transcriptional activity. Interacts with SP3; the interaction deacetylates SP3 and regulates its transcriptional activity. In vitro, C(18) ceramides increase this interaction and the subsequent SP3 deacetylation and SP3-mediated repression of the TERT promoter. Interacts with SPEN/MINT. Interacts with SPHK2. Interacts with SUV39H1. Interacts with TGIF. Interacts with TGIF2. Interacts with TRAF6. Interacts with TRIM28; the interaction recruits HDAC1 to E2F1 and inhibits its acetylation. Interacts with TSC22D3 isoform 1; this interaction affects HDAC1 activity on MYOG promoter and thus inhibits MYOD1 transcriptional activity. Interacts with UHRF1. Interacts with UHRF2. Interacts with ZBTB7A. Interacts with ZMYND8. Interacts with ZMYND15. Interacts with ZNF431. Interacts with ZNF516; this interaction is enhanced in the presence of PWWP2B. Interacts with ZNF541. Interacts with ZNF638. Interacts with ZNHIT1. Interacts with the non-histone region of MACROH2A1. Identified in a complex with HDAC2, KCTD19, DNTTIP1 and ZNF541. Interacts with MSX3. Interacts with VRK1. The cofactor is Zn(2+). In terms of processing, sumoylated on Lys-444 and Lys-476; which promotes enzymatic activity. Desumoylated by SENP1. Phosphorylation on Ser-421 and Ser-423 promotes enzymatic activity and interactions with NuRD and SIN3 complexes. Phosphorylated by CDK5. Post-translationally, ubiquitinated by CHFR and KCTD11, leading to its degradation by the proteasome.

It is found in the nucleus. The catalysed reaction is N(6)-acetyl-L-lysyl-[histone] + H2O = L-lysyl-[histone] + acetate. It catalyses the reaction N(6)-acetyl-L-lysyl-[protein] + H2O = L-lysyl-[protein] + acetate. It carries out the reaction N(6)-(2E)-butenoyl-L-lysyl-[protein] + H2O = (2E)-2-butenoate + L-lysyl-[protein]. The enzyme catalyses N(6)-[(S)-lactoyl]-L-lysyl-[protein] + H2O = (S)-lactate + L-lysyl-[protein]. With respect to regulation, inositol tetraphosphate (1D-myo-inositol 1,4,5,6-tetrakisphosphate) may act as an intermolecular glue between HDAC1 and N-Cor repressor complex components. Histone deacetylase that catalyzes the deacetylation of lysine residues on the N-terminal part of the core histones (H2A, H2B, H3 and H4). Histone deacetylation gives a tag for epigenetic repression and plays an important role in transcriptional regulation, cell cycle progression and developmental events. Histone deacetylases act via the formation of large multiprotein complexes. Acts as a component of the histone deacetylase NuRD complex which participates in the remodeling of chromatin. As part of the SIN3B complex is recruited downstream of the constitutively active genes transcriptional start sites through interaction with histones and mitigates histone acetylation and RNA polymerase II progression within transcribed regions contributing to the regulation of transcription. Also functions as a deacetylase for non-histone targets, such as NR1D2, RELA, SP1, SP3, STAT3 and TSHZ3. Deacetylates SP proteins, SP1 and SP3, and regulates their function. Component of the BRG1-RB1-HDAC1 complex, which negatively regulates the CREST-mediated transcription in resting neurons. Upon calcium stimulation, HDAC1 is released from the complex and CREBBP is recruited, which facilitates transcriptional activation. Deacetylates TSHZ3 and regulates its transcriptional repressor activity. Deacetylates 'Lys-310' in RELA and thereby inhibits the transcriptional activity of NF-kappa-B. Deacetylates NR1D2 and abrogates the effect of KAT5-mediated relieving of NR1D2 transcription repression activity. Component of a RCOR/GFI/KDM1A/HDAC complex that suppresses, via histone deacetylase (HDAC) recruitment, a number of genes implicated in multilineage blood cell development. Involved in CIART-mediated transcriptional repression of the circadian transcriptional activator: CLOCK-BMAL1 heterodimer. Required for the transcriptional repression of circadian target genes, such as PER1, mediated by the large PER complex or CRY1 through histone deacetylation. In addition to protein deacetylase activity, also has protein-lysine deacylase activity: acts as a protein decrotonylase and delactylase by mediating decrotonylation ((2E)-butenoyl) and delactylation (lactoyl) of histones, respectively. The chain is Histone deacetylase 1 (HDAC1) from Bos taurus (Bovine).